Consider the following 173-residue polypeptide: U4/U6.U5 small nuclear ribonucleoprotein component snu23 (173 aa).

The segment at 55-85 (WYCEACNETYKDSLSWLDHLNSTQHLRKTRT) adopts a Matrin-type zinc-finger fold. A coiled-coil region spans residues 119–149 (SLKERVERYHQELEAKKLRRKQKKVNKEKNS).

As to quaternary structure, component of the 25S U4/U6.U5 tri-snRNP particle, a subcomplex of the spliceosome.

The protein localises to the cytoplasm. It localises to the cytoskeleton. It is found in the microtubule organizing center. The protein resides in the spindle pole body. Its subcellular location is the nucleus. The chain is U4/U6.U5 small nuclear ribonucleoprotein component snu23 (snu23) from Schizosaccharomyces pombe (strain 972 / ATCC 24843) (Fission yeast).